The chain runs to 600 residues: Proton channel OTOP1 (600 aa).

Residues 1 to 50 are disordered; that stretch reads MPGDRGALSSPAASSGSPSAAPSGIAACPPPPSPLARASPQASGPRRGAS. Residues 1 to 56 are Cytoplasmic-facing; sequence MPGDRGALSSPAASSGSPSAAPSGIAACPPPPSPLARASPQASGPRRGASVPQKLA. Residues 7-27 are compositionally biased toward low complexity; the sequence is ALSSPAASSGSPSAAPSGIAA. The chain crosses the membrane as a helical span at residues 57 to 78; it reads ETLSSQYGLNVFVAGLLFLLAW. Residues 79–86 lie on the Extracellular side of the membrane; sequence AVHATGVG. A helical membrane pass occupies residues 87-110; sequence KSDLLCVLTALMLLQLLWMLWYVG. At 111 to 128 the chain is on the cytoplasmic side; it reads RSYMQRRLIRPKDTHAGA. A helical transmembrane segment spans residues 129–151; it reads RWLRGSITLFAFITIVLGCLKVA. The Extracellular portion of the chain corresponds to 152–161; the sequence is YFIGFSECLS. A helical membrane pass occupies residues 162-186; it reads ATEGVFPVTHAVHTLLQVYFLWGHA. Residues 187–194 lie on the Cytoplasmic side of the membrane; sequence KDIIMSFK. A helical membrane pass occupies residues 195-221; it reads TLERFGVIHSVFTNLLLWANSVLNESK. Over 222–262 the chain is Extracellular; that stretch reads HQLNEHKERLITLGFGNITIVLDDHTPQCNCTPPALCSALS. The helical transmembrane segment at 263–288 threads the bilayer; the sequence is HGIYYLYPFNIEYQILASTMLYVLWK. Residues 289 to 309 are Cytoplasmic-facing; the sequence is NIGRRVDSSRHQKMQCRFDGV. The helical transmembrane segment at 310–332 threads the bilayer; the sequence is LVGSVLGLTVLAATIAVVVVYMI. Topologically, residues 333–342 are extracellular; the sequence is HIGRSKSKSE. A helical transmembrane segment spans residues 343–368; sequence SALIMFYLYAITVLLLMGAAGLVGSW. Topologically, residues 369–386 are cytoplasmic; sequence IYRVDEKSLDESKNPARK. Residues 387–411 form a helical membrane-spanning segment; sequence LDADLLVATASGSWLLSWGSILAIA. Over 412–421 the chain is Extracellular; sequence CAETRPPYTW. The chain crosses the membrane as a helical span at residues 422 to 442; sequence YNLPYSVLVIVEKYVQNIFII. Over 443–532 the chain is Cytoplasmic; the sequence is ESVHLEPEGV…QGGMKRRLLR (90 aa). Residues 533-551 traverse the membrane as a helical segment; that stretch reads NITAFLFLCNISLWIPPAF. The Extracellular segment spans residues 552 to 569; that stretch reads GCRPEYDNGLEEIVFGFE. Residues 570–593 traverse the membrane as a helical segment; that stretch reads PWIIVVNLAMPFSIFYRMHAAAAL. The Cytoplasmic portion of the chain corresponds to 594–600; the sequence is FEVYCKI.

It belongs to the otopetrin family. As to quaternary structure, homodimer. Interacts with STAT1, independently of STAT1 phosphorylation status.

It localises to the cell membrane. It is found in the cell projection. The protein localises to the microvillus. It carries out the reaction H(+)(in) = H(+)(out). Activated by both acid and alkali, with proton influx in response to extracellular acid and proton efflux during alkali stimulation. Inhibited by Zn(2+); this inhibition is thought to be pH-sensitive. Currents evoked in response to mild acid (pH 6.0) stimulus may also be mildly potentiated by exposure to Zn(2+). Activated by NH(4)Cl. Its function is as follows. Proton-selective ion channel. Biphasically modulated by acid and alkali, mediating proton influx and efflux in response to extracellular acid and base stimulation, respectively. Sour taste receptor, which carries inward currents in response to extracellular acidification. Sensor for ammonium chloride (NH(4)Cl) in taste receptor cells. NH(4)Cl acts by increasing the intracellular pH, thereby generating a driving force for proton entry through OTOP1 channel. Might also participate in alkaline sensation. Plays a role in the regulation of Ca(2+) flux in response to purigenic (ATP, ADP and UDP) stimuli, leading to increase in cytosolic Ca(2+) due to influx of extracellular calcium. May play this role by inhibiting P2Y purinoceptor-mediated Ca(2+) release in a Ca(2+)-dependent manner and promote an influx of Ca(2+) in response to ATP. Through this mechanism and possibly others, plays a role in the formation and function of calcium carbonate-based structures in the vestibular system of the inner ear, called otoconia, that sense gravity and linear acceleration. In obesity, may attenuate adipose tissue inflammation, through the negative regulation of IFNG signaling, hence may play an adaptive role in the maintainance of metabolic homeostasis. Following alkali activation, may also be permeable Na(+), K(+), Cs(+) and Li(+). In Rattus norvegicus (Rat), this protein is Proton channel OTOP1.